Consider the following 406-residue polypeptide: Lysosome-associated membrane glycoprotein 1 (406 aa).

The first 24 residues, 1 to 24, serve as a signal peptide directing secretion; the sequence is MAAPGARRPLLLLLLAGLAHGASA. The first lumenal domain stretch occupies residues 25-188; the sequence is LFEVKNNGTT…SKEETHCTQD (164 aa). Over 25-370 the chain is Lumenal; sequence LFEVKNNGTT…VEECVQDGNN (346 aa). Asn-31, Asn-52, Asn-58, Asn-70, Asn-78, Asn-97, Asn-101, Asn-115, Asn-159, and Asn-177 each carry an N-linked (GlcNAc...) asparagine glycan. Cys-35 and Cys-74 form a disulfide bridge. A disulfide bridge links Cys-149 with Cys-185. The tract at residues 180–207 is disordered; the sequence is KEETHCTQDGPSPTTGPPSPSPPLVPTN. A hinge region spans residues 189-218; that stretch reads GPSPTTGPPSPSPPLVPTNPTVSKYNVTGN. The segment covering 193 to 205 has biased composition (pro residues); that stretch reads TTGPPSPSPPLVP. Residues Asn-214, Asn-219, Asn-232, and Asn-240 are each glycosylated (N-linked (GlcNAc...) asparagine). Positions 219–370 are second lumenal domain; the sequence is NGTCLLASMA…VEECVQDGNN (152 aa). Residues Cys-222 and Cys-259 are joined by a disulfide bond. N-linked (GlcNAc...) (high mannose) asparagine glycosylation occurs at Asn-252. Residues Asn-282, Asn-296, and Asn-311 are each glycosylated (N-linked (GlcNAc...) asparagine). An intrachain disulfide couples Cys-327 to Cys-364. The chain crosses the membrane as a helical span at residues 371–394; it reads MLIPIAVGGALAGLVLIVLIAYLI. Topologically, residues 395–406 are cytoplasmic; sequence GRKRSHAGYQTI.

It belongs to the LAMP family. Interacts with ABCB9; this interaction strongly stabilizes ABCB9 and protects ABCB9 against lysosomal degradation. Interacts with FURIN. Interacts with TMEM175; inhibiting the proton channel activity of TMEM175. Post-translationally, O- and N-glycosylated; some of the N-glycans attached to LAMP-1 are polylactosaminoglycans.

The protein resides in the lysosome membrane. The protein localises to the endosome membrane. It is found in the late endosome membrane. It localises to the cell membrane. Its subcellular location is the cytolytic granule membrane. Lysosomal membrane glycoprotein which plays an important role in lysosome biogenesis, lysosomal pH regulation, autophagy and cholesterol homeostasis. Acts as an important regulator of lysosomal lumen pH regulation by acting as a direct inhibitor of the proton channel TMEM175, facilitating lysosomal acidification for optimal hydrolase activity. Also plays an important role in NK-cells cytotoxicity. Mechanistically, participates in cytotoxic granule movement to the cell surface and perforin trafficking to the lytic granule. In addition, protects NK-cells from degranulation-associated damage induced by their own cytotoxic granule content. Presents carbohydrate ligands to selectins. Also implicated in tumor cell metastasis. The protein is Lysosome-associated membrane glycoprotein 1 (Lamp1) of Mus musculus (Mouse).